A 379-amino-acid polypeptide reads, in one-letter code: Homoserine O-acetyltransferase (379 aa).

One can recognise an AB hydrolase-1 domain in the interval 52 to 356; the sequence is NVVVVLHALT…VYGHDGFLVE (305 aa). The active-site Nucleophile is S157. R227 contacts substrate. Catalysis depends on residues D320 and H350. D351 lines the substrate pocket.

This sequence belongs to the AB hydrolase superfamily. MetX family. Homodimer.

It localises to the cytoplasm. It catalyses the reaction L-homoserine + acetyl-CoA = O-acetyl-L-homoserine + CoA. It functions in the pathway amino-acid biosynthesis; L-methionine biosynthesis via de novo pathway; O-acetyl-L-homoserine from L-homoserine: step 1/1. Its function is as follows. Transfers an acetyl group from acetyl-CoA to L-homoserine, forming acetyl-L-homoserine. This chain is Homoserine O-acetyltransferase, found in Mycobacterium tuberculosis (strain CDC 1551 / Oshkosh).